Consider the following 284-residue polypeptide: L-ribulose-5-phosphate 3-epimerase UlaE (284 aa).

This sequence belongs to the L-ribulose-5-phosphate 3-epimerase family.

It carries out the reaction L-ribulose 5-phosphate = L-xylulose 5-phosphate. It participates in cofactor degradation; L-ascorbate degradation; D-xylulose 5-phosphate from L-ascorbate: step 3/4. In terms of biological role, catalyzes the isomerization of L-xylulose-5-phosphate to L-ribulose-5-phosphate. Is involved in the anaerobic L-ascorbate utilization. This chain is L-ribulose-5-phosphate 3-epimerase UlaE, found in Shigella flexneri serotype 5b (strain 8401).